We begin with the raw amino-acid sequence, 290 residues long: tRNA-cytidine(32) 2-sulfurtransferase (290 aa).

The PP-loop motif signature appears at 66–71 (SGGKDS). The [4Fe-4S] cluster site is built by cysteine 141, cysteine 144, and cysteine 232.

This sequence belongs to the TtcA family. Homodimer. Mg(2+) serves as cofactor. It depends on [4Fe-4S] cluster as a cofactor.

The protein localises to the cytoplasm. The catalysed reaction is cytidine(32) in tRNA + S-sulfanyl-L-cysteinyl-[cysteine desulfurase] + AH2 + ATP = 2-thiocytidine(32) in tRNA + L-cysteinyl-[cysteine desulfurase] + A + AMP + diphosphate + H(+). It participates in tRNA modification. Catalyzes the ATP-dependent 2-thiolation of cytidine in position 32 of tRNA, to form 2-thiocytidine (s(2)C32). The sulfur atoms are provided by the cysteine/cysteine desulfurase (IscS) system. The sequence is that of tRNA-cytidine(32) 2-sulfurtransferase from Rhizobium etli (strain ATCC 51251 / DSM 11541 / JCM 21823 / NBRC 15573 / CFN 42).